A 956-amino-acid chain; its full sequence is Translation initiation factor IF-2 (956 aa).

A disordered region spans residues 50–351 (FPADSGGAAN…APSIGGVQVP (302 aa)). Positions 64–95 (APKPARAPKPAPKAAPAPPVEEAPAEPAPPAA) are enriched in pro residues. Composition is skewed to low complexity over residues 96-107 (PEVVAAPEAPVA) and 121-136 (PEAPAAERPAAQARPA). Residues 146-155 (AAEKPADTRT) are compositionally biased toward basic and acidic residues. Gly residues-rich tracts occupy residues 171-192 (RPGGQGGPRPGGPRPSGGGGPR) and 206-234 (RPGGSGAAGPRPGGTGAAGPRPGGSGQGG). A compositionally biased stretch (low complexity) spans 235–254 (SRPSPGMMPGRSAVGRPGAP). Positions 255–320 (ARGGSGGPGG…GTQGAFGRAG (66 aa)) are enriched in gly residues. A compositionally biased stretch (basic residues) spans 324–333 (VRARKSRRAK). The 172-residue stretch at 448-619 (ARPPVVTVMG…AVLLTADAAL (172 aa)) folds into the tr-type G domain. A G1 region spans residues 457–464 (GHVDHGKT). Position 457–464 (457–464 (GHVDHGKT)) interacts with GTP. Residues 482–486 (GITQH) form a G2 region. A G3 region spans residues 507–510 (DTPG). GTP contacts are provided by residues 507–511 (DTPGH) and 561–564 (NKVD). Residues 561–564 (NKVD) form a G4 region. Residues 597-599 (SAK) are G5.

The protein belongs to the TRAFAC class translation factor GTPase superfamily. Classic translation factor GTPase family. IF-2 subfamily.

The protein localises to the cytoplasm. Functionally, one of the essential components for the initiation of protein synthesis. Protects formylmethionyl-tRNA from spontaneous hydrolysis and promotes its binding to the 30S ribosomal subunits. Also involved in the hydrolysis of GTP during the formation of the 70S ribosomal complex. This is Translation initiation factor IF-2 from Beutenbergia cavernae (strain ATCC BAA-8 / DSM 12333 / CCUG 43141 / JCM 11478 / NBRC 16432 / NCIMB 13614 / HKI 0122).